Consider the following 583-residue polypeptide: Torsin-1A-interacting protein 1 (583 aa).

Residues 1 to 339 are Nuclear-facing; the sequence is MAGERWRAEG…DESSVKIKWW (339 aa). The segment at 23 to 208 is disordered; it reads APIREGRRRL…PPLRSPRPDA (186 aa). Ser60 is subject to Phosphoserine. 2 stretches are compositionally biased toward basic and acidic residues: residues 70–101 and 115–132; these read FEPR…EVRE and GPQE…RLEQ. A phosphoserine mark is found at Ser134, Ser142, Ser155, and Ser157. The segment covering 166–188 has biased composition (polar residues); sequence SSQPVTSQTVSKKTVRTPETSVM. Ser189 carries the post-translational modification Phosphoserine. Thr222 carries the phosphothreonine modification. Residues Ser228, Ser231, and Ser242 each carry the phosphoserine modification. A Glycyl lysine isopeptide (Lys-Gly) (interchain with G-Cter in SUMO2) cross-link involves residue Lys309. Ser316 is subject to Phosphoserine. Residues 340–360 traverse the membrane as a helical segment; the sequence is LLILVAALAMGIYWFFHTPVV. Positions 356-583 are interaction with TOR1A; that stretch reads HTPVVETTAV…ENALKAGSCL (228 aa). Positions 360-388 form a coiled coil; it reads VETTAVQEFQNQMKQLQSKYQSQDEKLWK. The Perinuclear space segment spans residues 361–583; the sequence is ETTAVQEFQN…ENALKAGSCL (223 aa). An N-linked (GlcNAc...) asparagine glycan is attached at Asn399.

The protein belongs to the TOR1AIP family. In terms of assembly, interacts with ATP1B4. Interacts with TOR1A (ATP-bound). Interacts with TOR1B, TOR2A and TOR3A. Interacts with VIM.

Its subcellular location is the nucleus inner membrane. In terms of biological role, required for nuclear membrane integrity. Induces TOR1A and TOR1B ATPase activity and is required for their location on the nuclear membrane. Binds to A- and B-type lamins. Possible role in membrane attachment and assembly of the nuclear lamina. The protein is Torsin-1A-interacting protein 1 (Tor1aip1) of Rattus norvegicus (Rat).